The primary structure comprises 906 residues: NACHT, LRR and PYD domains-containing protein 1b allele 4 (906 aa).

Positions 1–22 are disordered; the sequence is MEESPPKQKSNTKVAQHEGQQD. In terms of domain architecture, NACHT spans 126-435; sequence QLVIIEGAAG…EFFAAISCIL (310 aa). ATP is bound at residue 132–139; sequence GAAGIGKS. LRR repeat units lie at residues 627–647 and 684–704; these read NLEGLDLSGNSLRYSVVQSLC and SLTELYLQLNDLGDDGVRMLC. Residues 789–906 enclose the FIIND (incomplete) domain; it reads FWGPTGPVAT…FQEHGSRNAR (118 aa).

This sequence belongs to the NLRP family. In terms of tissue distribution, expressed in macrophages.

The protein localises to the cytoplasm. It localises to the cytosol. In terms of biological role, probable inactive allele of Nlrp1b, which lacks a CARD domain, suggesting that it is not able to form an inflammasome. Contrary to Nlrp1b allele 1, allele 4 is not activated by B.anthracis lethal toxin and no other activation signal is reported. This is NACHT, LRR and PYD domains-containing protein 1b allele 4 from Mus musculus (Mouse).